A 432-amino-acid chain; its full sequence is Probable imidazolonepropionase (432 aa).

2 residues coordinate 4-imidazolone-5-propanoate: Tyr-159 and His-192. Tyr-159 provides a ligand contact to N-formimidoyl-L-glutamate. His-260 lines the Fe(3+) pocket. A Zn(2+)-binding site is contributed by His-260. Glu-263 contacts 4-imidazolone-5-propanoate. Asp-334 contacts Fe(3+). Residue Asp-334 participates in Zn(2+) binding. Asn-336 serves as a coordination point for N-formimidoyl-L-glutamate.

This sequence belongs to the metallo-dependent hydrolases superfamily. HutI family. Zn(2+) is required as a cofactor. The cofactor is Fe(3+).

It catalyses the reaction 4-imidazolone-5-propanoate + H2O = N-formimidoyl-L-glutamate. It participates in amino-acid degradation; L-histidine degradation into L-glutamate; N-formimidoyl-L-glutamate from L-histidine: step 3/3. This Xenopus tropicalis (Western clawed frog) protein is Probable imidazolonepropionase (amdhd1).